Here is a 1047-residue protein sequence, read N- to C-terminus: Protein masquerade (1047 aa).

An N-terminal signal peptide occupies residues 1–30 (MPRHSSTMSRLVLPLIFSILLVSKPSPSQA). A CLIP 1 region spans residues 54-87 (KDCPGVCVHTLATLICYEVLDDVACPSPSMKCCI). Cystine bridges form between Cys56–Cys85, Cys60–Cys78, and Cys69–Cys86. A glycan (N-linked (GlcNAc...) asparagine) is linked at Asn95. Low complexity-rich tracts occupy residues 98–139 (AVRA…STTP) and 148–175 (KRPATSSTTKATVATTKKPSTTKKVATA). Residues 98–189 (AVRATTTPKT…KEEATKADDA (92 aa)) form a disordered region. Residues 176 to 189 (KPKDKEEATKADDA) show a composition bias toward basic and acidic residues. Residues 192–224 (DCTGVCVADRIAEYCEAYLTSDGLCKEGTKCCV) form a CLIP 2 region. 3 disulfide bridges follow: Cys193–Cys222, Cys197–Cys216, and Cys206–Cys223. Asn251 carries an N-linked (GlcNAc...) asparagine glycan. Positions 252–335 (QTLSEKSAPA…PLSNKLKSGQ (84 aa)) are disordered. The segment covering 263–280 (SSSTSTTSTTTTTSTTTT) has biased composition (low complexity). Asn287 carries an N-linked (GlcNAc...) asparagine glycan. Positions 307–325 (AAEEEEEQETEEDGEEEEP) are enriched in acidic residues. Residues 343 to 374 (ECEGECMNGIFAIFCDDIDSDAFCPGEESCCV) form a CLIP 3 region. Cystine bridges form between Cys344–Cys372, Cys348–Cys366, and Cys357–Cys373. A disordered region spans residues 376–428 (GGASEATPSSKAPPTKPAIKHAPKPAAKPARPASPPPAPPSSTSGGGGGGDFL). The CLIP 4 stretch occupies residues 457 to 492 (RCPGFCLLNIMAAFCERPSVLVSTPTTCAKGSVCCD). Disulfide bonds link Cys458/Cys490, Cys462/Cys484, and Cys471/Cys491. Residues 498-527 (APKPKLPPPTPSPTASPTAPPYVLPNTPSP) form a disordered region. A compositionally biased stretch (pro residues) spans 501-527 (PKLPPPTPSPTASPTAPPYVLPNTPSP). Positions 532-567 (ECPGSCIVSLLSFTCFKNAEMTDLFRCKRSGQICCA) are CLIP 5. Disulfide bonds link Cys533–Cys565, Cys537–Cys558, and Cys546–Cys566. Residue Asn582 is glycosylated (N-linked (GlcNAc...) asparagine). The disordered stretch occupies residues 583–673 (DTAYYPAPPP…TTTTTTTTPR (91 aa)). 3 stretches are compositionally biased toward pro residues: residues 588 to 606 (PAPPPPPIGPPQAYPPQTP), 613 to 638 (NPPPQGPPPQMAPHHPNPYQPPPPAP), and 650 to 661 (GLPPQPQPPMTT). Low complexity predominate over residues 662-672 (PPTTTTTTTTP). Intrachain disulfides connect Cys682/Cys916, Cys829/Cys845, Cys930/Cys1001, Cys961/Cys981, and Cys991/Cys1019. N-linked (GlcNAc...) asparagine glycosylation is found at Asn726 and Asn794. The tract at residues 803 to 1043 (VVGGEDGENG…FIGWINQIIS (241 aa)) is peptidase S1.

It belongs to the peptidase S1 family. CLIP subfamily. Proteolytically cleaved and thereafter secreted.

It is found in the secreted. Its subcellular location is the cell projection. The protein resides in the axon. Functionally, in embryogenesis, has a role in somatic muscle attachment and in the development of axonal pathways probably by stabilizing cell-matrix adhesion and/or by acting as a competitive antagonist of serine proteases. The protein is Protein masquerade of Drosophila melanogaster (Fruit fly).